Here is a 561-residue protein sequence, read N- to C-terminus: MAPQEQAVSQVMEKQSNNNNSDVIFRSKLPDIYIPNHLSLHDYIFQNISEFATKPCLINGPTGHVYTYSDVHVISRQIAANFHKLGVNQNDVVMLLLPNCPEFVLSFLAASFRGATATAANPFFTPAEIAKQAKASNTKLIITEARYVDKIKPLQNDDGVVIVCIDDNESVPIPEGCLRFTELTQSTTEASEVIDSVEISPDDVVALPYSSGTTGLPKGVMLTHKGLVTSVAQQVDGENPNLYFHSDDVILCVLPMFHIYALNSIMLCGLRVGAAILIMPKFEINLLLELIQRCKVTVAPMVPPIVLAIAKSSETEKYDLSSIRVVKSGAAPLGKELEDAVNAKFPNAKLGQGYGMTEAGPVLAMSLGFAKEPFPVKSGACGTVVRNAEMKIVDPDTGDSLSRNQPGEICIRGHQIMKGYLNNPAATAETIDKDGWLHTGDIGLIDDDDELFIVDRLKELIKYKGFQVAPAELEALLIGHPDITDVAVVAMKEEAAGEVPVAFVVKSKDSELSEDDVKQFVSKQVVFYKRINKVFFTESIPKAPSGKILRKDLRAKLANGL.

Positions 210, 211, 212, 213, 214, and 218 each coordinate ATP. The (E)-4-coumaroyl-AMP site is built by Y260 and S264. K281 contacts CoA. The interval 283 to 352 (EINLLLELIQ…AKFPNAKLGQ (70 aa)) is SBD1. 5 residues coordinate (E)-4-coumaroyl-AMP: A330, Q352, G353, T357, and M365. Residues Q352, G353, and T357 each contribute to the ATP site. The SBD2 stretch occupies residues 353–420 (GYGMTEAGPV…IRGHQIMKGY (68 aa)). ATP is bound by residues D441 and R456. Residues K458 and K462 each contribute to the (E)-4-coumaroyl-AMP site. 2 residues coordinate CoA: K464 and G465. K547 is a binding site for ATP.

Belongs to the ATP-dependent AMP-binding enzyme family. The cofactor is Mg(2+). Preferentially expressed in roots, bolting stems and siliques. Also detected in leaves.

It carries out the reaction (E)-4-coumarate + ATP + CoA = (E)-4-coumaroyl-CoA + AMP + diphosphate. The catalysed reaction is (E)-caffeate + ATP + CoA = (E)-caffeoyl-CoA + AMP + diphosphate. The enzyme catalyses (E)-ferulate + ATP + CoA = (E)-feruloyl-CoA + AMP + diphosphate. It catalyses the reaction (E)-4-coumarate + ATP + H(+) = (E)-4-coumaroyl-AMP + diphosphate. It carries out the reaction (E)-4-coumaroyl-AMP + CoA = (E)-4-coumaroyl-CoA + AMP + H(+). The catalysed reaction is (E)-caffeate + ATP + H(+) = (E)-caffeoyl-AMP + diphosphate. The enzyme catalyses (E)-caffeoyl-AMP + CoA = (E)-caffeoyl-CoA + AMP + H(+). It catalyses the reaction (E)-ferulate + ATP + H(+) = (E)-feruloyl-AMP + diphosphate. It carries out the reaction (E)-feruloyl-AMP + CoA = (E)-feruloyl-CoA + AMP + H(+). It functions in the pathway phytoalexin biosynthesis; 3,4',5-trihydroxystilbene biosynthesis; 3,4',5-trihydroxystilbene from trans-4-coumarate: step 1/2. Produces CoA thioesters of a variety of hydroxy- and methoxy-substituted cinnamic acids, which are used to synthesize several phenylpropanoid-derived compounds, including anthocyanins, flavonoids, isoflavonoids, coumarins, lignin, suberin and wall-bound phenolics. Follows a two-step reaction mechanism, wherein the carboxylate substrate first undergoes adenylation by ATP, followed by a thioesterification in the presence of CoA to yield the final CoA thioesters. This Arabidopsis thaliana (Mouse-ear cress) protein is 4-coumarate--CoA ligase 1.